A 317-amino-acid chain; its full sequence is MSAQQTNLGIVVGVDGSPCSHTAVEWAARDAQMRNVALRVVQVVPPVITAPEGWAFEYSRFQEAQKREIVEHSYLVAQAHQIVEQAHKVALEASSSGRAAQITGEVLHGQIVPTLTNISRQVAMVVLGYRGQGAVAGALLGSVSSSLVRHAHGPVAVIPEEPRPARPPHAPVVVGIDGSPTSGLAAEIAFDEASRRGVDLVALHAWSDMGPLDFPRLNWAPIEWRNLEDEQEKMLARRLSGWQDRYPDVVVHKVVVCDRPAPRLLELAQTAQLVVVGSHGRGGFPGMHLGSVSRAVVNSGQAPVIVARIPQDPAVPA.

ATP is bound by residues G13, 128-134 (GYRGQGA), 142-143 (SV), G175, D208, 277-283 (GSHGRGG), and 291-293 (SVS).

This sequence belongs to the universal stress protein A family.

The sequence is that of Universal stress protein MT2052 from Mycobacterium tuberculosis (strain CDC 1551 / Oshkosh).